The following is a 286-amino-acid chain: ATP synthase gamma chain (286 aa).

The protein belongs to the ATPase gamma chain family. F-type ATPases have 2 components, CF(1) - the catalytic core - and CF(0) - the membrane proton channel. CF(1) has five subunits: alpha(3), beta(3), gamma(1), delta(1), epsilon(1). CF(0) has three main subunits: a, b and c.

It is found in the cell inner membrane. Produces ATP from ADP in the presence of a proton gradient across the membrane. The gamma chain is believed to be important in regulating ATPase activity and the flow of protons through the CF(0) complex. The protein is ATP synthase gamma chain of Shewanella amazonensis (strain ATCC BAA-1098 / SB2B).